Reading from the N-terminus, the 98-residue chain is ATP-dependent Clp protease adapter protein ClpS (98 aa).

It belongs to the ClpS family. As to quaternary structure, binds to the N-terminal domain of the chaperone ClpA.

In terms of biological role, involved in the modulation of the specificity of the ClpAP-mediated ATP-dependent protein degradation. The sequence is that of ATP-dependent Clp protease adapter protein ClpS from Synechocystis sp. (strain ATCC 27184 / PCC 6803 / Kazusa).